Consider the following 313-residue polypeptide: MRRGALLASALAAYAGYLALGALLVARLERPHEARLRAELGTLREQLLQHSPCVAAHALDAFVERVLAAGRLGRAALANASGAANASDPAWDFASALFFASTLVTTVGYGYTTPLTDAGKAFSIVFALLGVPITMLLLTASAQRLSLLLTHAPLSWLSLHWGWPPQRAARWHLVALLMVIVAIFFLVPAAVFAYLEEAWSFLDAFYFCFISLSTIGLGDYVPGEAPGQPYRALYKVLVTAYLFLGLVAMVLVLQTFRRVSDLHGLTELILLPDPDPASLSQDEDDQVAVLDARTDLHQHLSAASHADYASIPR.

Over 1–4 (MRRG) the chain is Cytoplasmic. A helical membrane pass occupies residues 5–25 (ALLASALAAYAGYLALGALLV). N-linked (GlcNAc...) asparagine glycans are attached at residues N79 and N85. The pore-forming intramembrane region spans 90 to 115 (AWDFASALFFASTLVTTVGYGYTTPL). The K(+) site is built by T106, V107, G108, and Y109. The tract at residues 106 to 111 (TVGYGY) is selectivity filter 1. A helical transmembrane segment spans residues 121–141 (AFSIVFALLGVPITMLLLTAS). Over 142–172 (AQRLSLLLTHAPLSWLSLHWGWPPQRAARWH) the chain is Cytoplasmic. A helical membrane pass occupies residues 173–193 (LVALLMVIVAIFFLVPAAVFA). Residues 199-223 (WSFLDAFYFCFISLSTIGLGDYVPG) constitute an intramembrane region (pore-forming). Positions 214, 215, and 216 each coordinate K(+). The segment at 214–219 (TIGLGD) is selectivity filter 2. Residues 236-256 (VLVTAYLFLGLVAMVLVLQTF) form a helical membrane-spanning segment. The Cytoplasmic portion of the chain corresponds to 257–313 (RRVSDLHGLTELILLPDPDPASLSQDEDDQVAVLDARTDLHQHLSAASHADYASIPR). Short sequence motifs (lysosomal targeting signal) lie at residues 282–290 (DEDDQVAVL) and 308–312 (YASIP).

Belongs to the two pore domain potassium channel (TC 1.A.1.8) family. As to quaternary structure, homodimer; disulfide-linked. N-glycosylation is necessary for targeting to lysosomes.

It localises to the late endosome membrane. The protein resides in the lysosome membrane. It carries out the reaction K(+)(in) = K(+)(out). Its function is as follows. K(+) channel that conducts outward rectifying currents at the membranes of the endolysosomal system. Active in lysosomes where it regulates lysosome numbers and size. In macrophages, enables K(+) efflux coupled to ATP-induced NLRP3 inflammasome activation upon bacterial infection. Cooperates with ATP-gated P2RX7 to activate NLRP3 inflammasome, with P2RX7 conducting Ca(2+) and Na(+) influx that sets the membrane potential for K(+) efflux. The sequence is that of Potassium channel subfamily K member 6 from Mus musculus (Mouse).